We begin with the raw amino-acid sequence, 266 residues long: Protein-ADP-ribose hydrolase (266 aa).

In terms of domain architecture, Macro spans 74 to 265 (TDLKDLKPIK…LYKEAFNRDA (192 aa)). Positions 93, 94, and 107 each coordinate ADP-D-ribose. Cysteine 113, histidine 118, and cysteine 120 together coordinate Zn(2+). ADP-D-ribose-binding residues include cysteine 120, isoleucine 121, aspartate 122, serine 212, threonine 213, glycine 214, and phenylalanine 216.

It belongs to the MacroD-type family. Zn-Macro subfamily. The cofactor is Zn(2+).

The enzyme catalyses 4-O-(ADP-D-ribosyl)-L-aspartyl-[protein] + H2O = L-aspartyl-[protein] + ADP-D-ribose + H(+). Functionally, ADP-ribosylhydrolase that specifically reverses the SirTM-mediated mono-ADP-ribosylation at an asparatate residue of GcvH-L, by releasing ADP-ribose from the target protein. May play a role in the regulation of the response to host-induced oxidative stress. The polypeptide is Protein-ADP-ribose hydrolase (Staphylococcus aureus (strain COL)).